A 99-amino-acid chain; its full sequence is A-type ATP synthase subunit F (99 aa).

It belongs to the V-ATPase F subunit family. As to quaternary structure, has multiple subunits with at least A(3), B(3), C, D, E, F, H, I and proteolipid K(x).

It is found in the cell membrane. Component of the A-type ATP synthase that produces ATP from ADP in the presence of a proton gradient across the membrane. The protein is A-type ATP synthase subunit F of Methanococcus aeolicus (strain ATCC BAA-1280 / DSM 17508 / OCM 812 / Nankai-3).